The primary structure comprises 130 residues: UPF0251 protein Swol_2090 (130 aa).

This sequence belongs to the UPF0251 family.

The protein is UPF0251 protein Swol_2090 of Syntrophomonas wolfei subsp. wolfei (strain DSM 2245B / Goettingen).